A 119-amino-acid polypeptide reads, in one-letter code: Ribosome-binding factor A (119 aa).

This sequence belongs to the RbfA family. As to quaternary structure, monomer. Binds 30S ribosomal subunits, but not 50S ribosomal subunits or 70S ribosomes.

It localises to the cytoplasm. Functionally, one of several proteins that assist in the late maturation steps of the functional core of the 30S ribosomal subunit. Associates with free 30S ribosomal subunits (but not with 30S subunits that are part of 70S ribosomes or polysomes). Required for efficient processing of 16S rRNA. May interact with the 5'-terminal helix region of 16S rRNA. The polypeptide is Ribosome-binding factor A (Citrifermentans bemidjiense (strain ATCC BAA-1014 / DSM 16622 / JCM 12645 / Bem) (Geobacter bemidjiensis)).